The chain runs to 199 residues: FMN-dependent NADH:quinone oxidoreductase (199 aa).

Residue 17 to 19 (SYS) coordinates FMN.

This sequence belongs to the azoreductase type 1 family. As to quaternary structure, homodimer. It depends on FMN as a cofactor.

The catalysed reaction is 2 a quinone + NADH + H(+) = 2 a 1,4-benzosemiquinone + NAD(+). The enzyme catalyses N,N-dimethyl-1,4-phenylenediamine + anthranilate + 2 NAD(+) = 2-(4-dimethylaminophenyl)diazenylbenzoate + 2 NADH + 2 H(+). Functionally, quinone reductase that provides resistance to thiol-specific stress caused by electrophilic quinones. In terms of biological role, also exhibits azoreductase activity. Catalyzes the reductive cleavage of the azo bond in aromatic azo compounds to the corresponding amines. The sequence is that of FMN-dependent NADH:quinone oxidoreductase from Mycoplasmopsis synoviae (strain 53) (Mycoplasma synoviae).